A 230-amino-acid polypeptide reads, in one-letter code: Large ribosomal subunit protein uL1 (230 aa).

This sequence belongs to the universal ribosomal protein uL1 family. In terms of assembly, part of the 50S ribosomal subunit.

In terms of biological role, binds directly to 23S rRNA. The L1 stalk is quite mobile in the ribosome, and is involved in E site tRNA release. Protein L1 is also a translational repressor protein, it controls the translation of the L11 operon by binding to its mRNA. In Afipia carboxidovorans (strain ATCC 49405 / DSM 1227 / KCTC 32145 / OM5) (Oligotropha carboxidovorans), this protein is Large ribosomal subunit protein uL1.